Consider the following 158-residue polypeptide: MQKLLLAVLFFSLLAIATARPKYHKQGRRKGDACRLHCLFDNIVCETPCRVLFRSRFSYHVCARDCRKDRVDCYIGCKNIDANPKAEAEPGSLDKEAGTKGEKEKNGKKEKKEKKEKGEYAIGNAESGTGSSGGSNKTHDDDDDDHDDVYENDDENEE.

A signal peptide spans 1–19 (MQKLLLAVLFFSLLAIATA). The interval 82–158 (ANPKAEAEPG…VYENDDENEE (77 aa)) is disordered. The segment covering 84-107 (PKAEAEPGSLDKEAGTKGEKEKNG) has biased composition (basic and acidic residues). A compositionally biased stretch (acidic residues) spans 141 to 158 (DDDDDHDDVYENDDENEE).

In terms of tissue distribution, prismatic layer of shell (at protein level). Expressed primarily in the mantle with highest level in the mantle edge and lower level in the mantle pallium.

The protein localises to the secreted. This is an uncharacterized protein from Pinctada maxima (Silver-lipped pearl oyster).